Consider the following 165-residue polypeptide: Crossover junction endodeoxyribonuclease RuvC (165 aa).

Catalysis depends on residues Asp7, Glu67, and Asp140. The Mg(2+) site is built by Asp7, Glu67, and Asp140.

This sequence belongs to the RuvC family. Homodimer which binds Holliday junction (HJ) DNA. The HJ becomes 2-fold symmetrical on binding to RuvC with unstacked arms; it has a different conformation from HJ DNA in complex with RuvA. In the full resolvosome a probable DNA-RuvA(4)-RuvB(12)-RuvC(2) complex forms which resolves the HJ. It depends on Mg(2+) as a cofactor.

The protein resides in the cytoplasm. It catalyses the reaction Endonucleolytic cleavage at a junction such as a reciprocal single-stranded crossover between two homologous DNA duplexes (Holliday junction).. Its function is as follows. The RuvA-RuvB-RuvC complex processes Holliday junction (HJ) DNA during genetic recombination and DNA repair. Endonuclease that resolves HJ intermediates. Cleaves cruciform DNA by making single-stranded nicks across the HJ at symmetrical positions within the homologous arms, yielding a 5'-phosphate and a 3'-hydroxyl group; requires a central core of homology in the junction. The consensus cleavage sequence is 5'-(A/T)TT(C/G)-3'. Cleavage occurs on the 3'-side of the TT dinucleotide at the point of strand exchange. HJ branch migration catalyzed by RuvA-RuvB allows RuvC to scan DNA until it finds its consensus sequence, where it cleaves and resolves the cruciform DNA. The protein is Crossover junction endodeoxyribonuclease RuvC of Thermotoga petrophila (strain ATCC BAA-488 / DSM 13995 / JCM 10881 / RKU-1).